An 866-amino-acid polypeptide reads, in one-letter code: Potassium voltage-gated channel subfamily KQT member 3 (866 aa).

Residues 1 to 42 (MGLKARRPAGAAGGGGDGGGGGGGAANPAGGDAAAAGDEERK) form a disordered region. Topologically, residues 1–120 (MGLKARRPAG…IYDALERPRG (120 aa)) are cytoplasmic. Residues 11 to 25 (AAGGGGDGGGGGGGA) show a composition bias toward gly residues. The span at 26 to 36 (ANPAGGDAAAA) shows a compositional bias: low complexity. Position 81 is a phosphothreonine (Thr-81). A helical membrane pass occupies residues 121–143 (WALLYHALVFLIVLGCLILAVLT). Topologically, residues 144–153 (TFREYETVSG) are extracellular. Residues 154–175 (DWLLLLETFAIFIFGAEFALRI) form a helical membrane-spanning segment. The Cytoplasmic segment spans residues 176-193 (WAAGCCCRYKGWRGRLKF). Residues 194-213 (ARKPLCMLDIFVLIASVPVV) form a helical membrane-spanning segment. Residues 214-225 (AVGNQGNVLATS) lie on the Extracellular side of the membrane. The chain crosses the membrane as a helical; Voltage-sensor span at residues 226 to 244 (LRSLRFLQILRMLRMDRRG). Arg-243 contacts a 1,2-diacyl-sn-glycero-3-phospho-(1D-myo-inositol-4,5-bisphosphate). The Cytoplasmic segment spans residues 245–256 (GTWKLLGSAICA). The chain crosses the membrane as a helical span at residues 257–282 (HSKELITAWYIGFLTLILSSFLVYLV). Lys-259 contacts a 1,2-diacyl-sn-glycero-3-phospho-(1D-myo-inositol-4,5-bisphosphate). The Extracellular portion of the chain corresponds to 283–302 (EKDVPEVDAQGEEMKEEFET). An intramembrane region (pore-forming) is located at residues 303–315 (YADALWWGLITLA). A Selectivity filter motif is present at residues 316–321 (TIGYGD). Topologically, residues 316–326 (TIGYGDKTPKT) are extracellular. The helical transmembrane segment at 327–353 (WEGRLIAATFSLIGVSFFALPAGILGS) threads the bilayer. The Cytoplasmic portion of the chain corresponds to 354-866 (GLALKVQEQH…SIWTPSGKPT (513 aa)). Residues 356-537 (ALKVQEQHRQ…RLYKKKFKET (182 aa)) are mediates interaction with calmodulin. Lys-366 provides a ligand contact to a 1,2-diacyl-sn-glycero-3-phospho-(1D-myo-inositol-4,5-bisphosphate). 3 disordered regions span residues 574–617 (PGPP…EDQS), 656–676 (GFSPSKGASSPAEAEQKEDRR), and 757–866 (QVEL…GKPT). The segment covering 837–866 (EPFTPSGSLPLSSTGDGISDSIWTPSGKPT) has biased composition (polar residues).

Belongs to the potassium channel family. KQT (TC 1.A.1.15) subfamily. Kv7.3/KCNQ3 sub-subfamily. In terms of assembly, heterotetramer with KCNQ2; forms heterotetrameric native M-channel responsible for the M-current. Interacts with calmodulin; the interaction is calcium-independent, constitutive and participates in the proper assembly of a functional M-channel. Heteromultimer with KCNQ5. May associate with KCNE2. Interacts with IQCJ-SCHIP1. Interacts (via the pore module) with SLC5A3/SMIT1; forms a coregulatory complex that alters ion selectivity, voltage dependence and gating kinetics of the channel. Post-translationally, KCNQ2/KCNQ3 are ubiquitinated by NEDD4L. Ubiquitination leads to protein degradation. Degradation induced by NEDD4L is inhibited by USP36.

It is found in the cell membrane. It catalyses the reaction K(+)(in) = K(+)(out). It carries out the reaction Rb(+)(in) = Rb(+)(out). The enzyme catalyses Cs(+)(in) = Cs(+)(out). The catalysed reaction is Na(+)(in) = Na(+)(out). Phosphatidylinositol-4,5-bisphosphate (PIP2) potentiates the activation of KCNQ channels by enhancing the electro-mechanical coupling of the voltage-sensing domain (VSD) and the pore-forming domain (PD). In the closed state of the channel, PIP2 is anchored at the S2-S3 loop; upon channel activation, PIP2 interacts with the S4-S5 linker and is involved in channel gating. Calcium suppresses KCNQ2-KCNQ3 channel currents, with calcium-bound calmodulin inducing a change in channel configuration which leads to the reduction of channel affinity for PIP2 and subsequent current suppression. Its function is as follows. Pore-forming subunit of the voltage-gated potassium (Kv) M-channel which is responsible for the M-current, a key controller of neuronal excitability. M-channel is composed of pore-forming subunits KCNQ2 and KCNQ3 assembled as heterotetramers. The native M-current has a slowly activating and deactivating potassium conductance which plays a critical role in determining the subthreshold electrical excitability of neurons as well as the responsiveness to synaptic inputs. M-channel is selectively permeable in vitro to other cations besides potassium, in decreasing order of affinity K(+) &gt; Rb(+) &gt; Cs(+) &gt; Na(+). M-channel association with SLC5A3/SMIT1 alters channel ion selectivity, increasing Na(+) and Cs(+) permeation relative to K(+). Suppressed by activation of M1 muscarinic acetylcholine receptors. KCNQ3 also associates with KCNQ5 to form a functional channel in vitro and may also contribute to the M-current in brain. The protein is Potassium voltage-gated channel subfamily KQT member 3 of Bos taurus (Bovine).